The primary structure comprises 365 residues: MSSLEAIRYARGNLELLDQLALPLETKYIDVRDCNACWRCIKDMNVRGAPAIAIAAALALAVELEAKRGTLTTCEAAEAFVRERFDHMYTSRPTAVNLGEAKNRIQALAKRLSESGDVSGMIEGVIEGCEAMHAEDVASCRAIGDKGAAALLRACGAKDGENIKVMTCCNTGSLATAGYGTALGVIRALWESGRLERAYCLETRPYNQGSRLTAYELVYEKIPGTLICDNMAAALMARGDVDAIVVGADRVAANGDFANKIGTYSLAVNAKHHGVPMFTAAPVTTLDPETATGADIHIEERPGEEVTHSLGKRVAAEGIDVWNPSFDVTPAALLTGVITEHGVIEKNASGLFPVADFVAQAKGGT.

The active-site Proton donor is the aspartate 249.

This sequence belongs to the eIF-2B alpha/beta/delta subunits family. MtnA subfamily.

It is found in the cytoplasm. The protein resides in the nucleus. It catalyses the reaction 5-(methylsulfanyl)-alpha-D-ribose 1-phosphate = 5-(methylsulfanyl)-D-ribulose 1-phosphate. Its pathway is amino-acid biosynthesis; L-methionine biosynthesis via salvage pathway; L-methionine from S-methyl-5-thio-alpha-D-ribose 1-phosphate: step 1/6. Functionally, catalyzes the interconversion of methylthioribose-1-phosphate (MTR-1-P) into methylthioribulose-1-phosphate (MTRu-1-P). This is Methylthioribose-1-phosphate isomerase from Ostreococcus lucimarinus (strain CCE9901).